Reading from the N-terminus, the 335-residue chain is Holliday junction branch migration complex subunit RuvB (335 aa).

A large ATPase domain (RuvB-L) region spans residues 1-183; the sequence is MDERIISSET…FGVIDHLEFY (183 aa). Residues Leu22, Arg23, Gly64, Lys67, Thr68, Thr69, 130–132, Arg173, Tyr183, and Arg220 each bind ATP; that span reads EDY. A Mg(2+)-binding site is contributed by Thr68. A small ATPAse domain (RuvB-S) region spans residues 184–254; the sequence is TEEQLTEIVL…LAKEALTLLQ (71 aa). Residues 257–335 are head domain (RuvB-H); the sequence is PRGLDTIDQK…HLGISYEKEV (79 aa). The DNA site is built by Arg293, Arg312, and Arg317.

It belongs to the RuvB family. In terms of assembly, homohexamer. Forms an RuvA(8)-RuvB(12)-Holliday junction (HJ) complex. HJ DNA is sandwiched between 2 RuvA tetramers; dsDNA enters through RuvA and exits via RuvB. An RuvB hexamer assembles on each DNA strand where it exits the tetramer. Each RuvB hexamer is contacted by two RuvA subunits (via domain III) on 2 adjacent RuvB subunits; this complex drives branch migration. In the full resolvosome a probable DNA-RuvA(4)-RuvB(12)-RuvC(2) complex forms which resolves the HJ.

The protein resides in the cytoplasm. The enzyme catalyses ATP + H2O = ADP + phosphate + H(+). The RuvA-RuvB-RuvC complex processes Holliday junction (HJ) DNA during genetic recombination and DNA repair, while the RuvA-RuvB complex plays an important role in the rescue of blocked DNA replication forks via replication fork reversal (RFR). RuvA specifically binds to HJ cruciform DNA, conferring on it an open structure. The RuvB hexamer acts as an ATP-dependent pump, pulling dsDNA into and through the RuvAB complex. RuvB forms 2 homohexamers on either side of HJ DNA bound by 1 or 2 RuvA tetramers; 4 subunits per hexamer contact DNA at a time. Coordinated motions by a converter formed by DNA-disengaged RuvB subunits stimulates ATP hydrolysis and nucleotide exchange. Immobilization of the converter enables RuvB to convert the ATP-contained energy into a lever motion, pulling 2 nucleotides of DNA out of the RuvA tetramer per ATP hydrolyzed, thus driving DNA branch migration. The RuvB motors rotate together with the DNA substrate, which together with the progressing nucleotide cycle form the mechanistic basis for DNA recombination by continuous HJ branch migration. Branch migration allows RuvC to scan DNA until it finds its consensus sequence, where it cleaves and resolves cruciform DNA. This is Holliday junction branch migration complex subunit RuvB from Listeria monocytogenes serotype 4a (strain HCC23).